We begin with the raw amino-acid sequence, 410 residues long: Multifunctional CCA protein (410 aa).

Gly-8 and Arg-11 together coordinate ATP. Gly-8 and Arg-11 together coordinate CTP. Glu-21 and Asp-23 together coordinate Mg(2+). ATP contacts are provided by Arg-91, Arg-137, and Arg-140. 3 residues coordinate CTP: Arg-91, Arg-137, and Arg-140. Residues 228-329 enclose the HD domain; the sequence is TGIHSLMTLR…VKLLEQVDAF (102 aa).

This sequence belongs to the tRNA nucleotidyltransferase/poly(A) polymerase family. Bacterial CCA-adding enzyme type 1 subfamily. As to quaternary structure, monomer. Can also form homodimers and oligomers. Requires Mg(2+) as cofactor. It depends on Ni(2+) as a cofactor.

It carries out the reaction a tRNA precursor + 2 CTP + ATP = a tRNA with a 3' CCA end + 3 diphosphate. It catalyses the reaction a tRNA with a 3' CCA end + 2 CTP + ATP = a tRNA with a 3' CCACCA end + 3 diphosphate. Functionally, catalyzes the addition and repair of the essential 3'-terminal CCA sequence in tRNAs without using a nucleic acid template. Adds these three nucleotides in the order of C, C, and A to the tRNA nucleotide-73, using CTP and ATP as substrates and producing inorganic pyrophosphate. tRNA 3'-terminal CCA addition is required both for tRNA processing and repair. Also involved in tRNA surveillance by mediating tandem CCA addition to generate a CCACCA at the 3' terminus of unstable tRNAs. While stable tRNAs receive only 3'-terminal CCA, unstable tRNAs are marked with CCACCA and rapidly degraded. This is Multifunctional CCA protein from Legionella pneumophila subsp. pneumophila (strain Philadelphia 1 / ATCC 33152 / DSM 7513).